We begin with the raw amino-acid sequence, 830 residues long: Ribosome biogenesis protein ERB1 (830 aa).

Positions 1–142 are disordered; it reads MAPQPLKVGT…NKDLPVDEKL (142 aa). Acidic residues-rich tracts occupy residues 35-44 and 52-109; these read VSEESDEEFG and MSDD…DSDS. Basic and acidic residues predominate over residues 131–142; sequence EENKDLPVDEKL. WD repeat units lie at residues 481–520, 523–563, 660–698, 701–740, 744–783, and 799–830; these read PGDT…EVWR, LHAG…APHI, KTPG…LIRT, SGVK…KPYK, YHNR…DLMQ, and IDGI…LWCS.

Belongs to the WD repeat BOP1/ERB1 family. In terms of assembly, component of the NOP7 complex, composed of ERB1, NOP7 and YTM1. The complex is held together by ERB1, which interacts with NOP7 via its N-terminal domain and with YTM1 via a high-affinity interaction between the seven-bladed beta-propeller domains of the 2 proteins. The NOP7 complex associates with the 66S pre-ribosome.

It localises to the nucleus. The protein localises to the nucleolus. It is found in the nucleoplasm. Component of the NOP7 complex, which is required for maturation of the 25S and 5.8S ribosomal RNAs and formation of the 60S ribosome. The polypeptide is Ribosome biogenesis protein ERB1 (Cryptococcus neoformans var. neoformans serotype D (strain JEC21 / ATCC MYA-565) (Filobasidiella neoformans)).